The following is a 595-amino-acid chain: Beta-lactamase-like protein ARB_00930 (595 aa).

Residues 1-18 form the signal peptide; sequence MVVCFLWLLLPYAATTLS. Residues N70 and N102 are each glycosylated (N-linked (GlcNAc...) asparagine). The active-site Acyl-ester intermediate is S117. N-linked (GlcNAc...) asparagine glycans are attached at residues N147, N156, and N195. Y235 functions as the Proton acceptor in the catalytic mechanism. N-linked (GlcNAc...) asparagine glycosylation is found at N249, N461, and N473.

The protein belongs to the beta-lactamase family.

It localises to the secreted. The enzyme catalyses a beta-lactam + H2O = a substituted beta-amino acid. In Arthroderma benhamiae (strain ATCC MYA-4681 / CBS 112371) (Trichophyton mentagrophytes), this protein is Beta-lactamase-like protein ARB_00930.